The chain runs to 123 residues: Secreted RxLR effector protein RXLR-C21 (123 aa).

An N-terminal signal peptide occupies residues 1–23; the sequence is MRLHLLVLSVIVVSLLVSDNAHA. The RxLR-dEER motif lies at 32-65; sequence RALRETPINGLVTNQLAVSRNLTPAKFITNSEER. A helical membrane pass occupies residues 101–121; that stretch reads VTTICSIVLFVMVFGCLYKIF.

Belongs to the RxLR effector family.

Its subcellular location is the secreted. It localises to the host endoplasmic reticulum membrane. Its function is as follows. Secreted effector that does not suppress pattern-triggered immunity (PTI) in plant host. The chain is Secreted RxLR effector protein RXLR-C21 from Plasmopara halstedii (Downy mildew of sunflower).